The chain runs to 1358 residues: DNA-directed RNA polymerase subunit beta (1358 aa).

It belongs to the RNA polymerase beta chain family. As to quaternary structure, the RNAP catalytic core consists of 2 alpha, 1 beta, 1 beta' and 1 omega subunit. When a sigma factor is associated with the core the holoenzyme is formed, which can initiate transcription.

It catalyses the reaction RNA(n) + a ribonucleoside 5'-triphosphate = RNA(n+1) + diphosphate. Functionally, DNA-dependent RNA polymerase catalyzes the transcription of DNA into RNA using the four ribonucleoside triphosphates as substrates. The sequence is that of DNA-directed RNA polymerase subunit beta from Xanthobacter autotrophicus (strain ATCC BAA-1158 / Py2).